A 298-amino-acid chain; its full sequence is Beta-soluble NSF attachment protein (298 aa).

It belongs to the SNAP family. Interacts with PRKCABP, and disrupts the interaction between GRIA2 and PRKCABP, leading to the internalization of GRIA2.

The protein resides in the membrane. Its function is as follows. Required for vesicular transport between the endoplasmic reticulum and the Golgi apparatus. The polypeptide is Beta-soluble NSF attachment protein (NAPB) (Homo sapiens (Human)).